We begin with the raw amino-acid sequence, 425 residues long: Histone-binding protein RBBP4 (425 aa).

Ala2 carries the post-translational modification N-acetylalanine. An N6-acetyllysine; alternate modification is found at Lys4. Lys4 participates in a covalent cross-link: Glycyl lysine isopeptide (Lys-Gly) (interchain with G-Cter in SUMO2); alternate. Lys4 is covalently cross-linked (Glycyl lysine isopeptide (Lys-Gly) (interchain with G-Cter in ubiquitin); alternate). WD repeat units follow at residues 32–125 (YDLV…NHEG), 126–175 (EVNR…RLRG), 176–223 (HQKE…KTIF), 225–270 (GHTA…HSVD), 271–314 (AHTA…HSFE), 315–371 (SHKD…FIHG), and 372–404 (GHTA…VWQM). Ser110 carries the phosphoserine modification. Lys160 bears the N6-acetyllysine; alternate mark. A Glycyl lysine isopeptide (Lys-Gly) (interchain with G-Cter in SUMO2); alternate cross-link involves residue Lys160. Residue Ser355 is modified to Phosphoserine.

The protein belongs to the WD repeat RBAP46/RBAP48/MSI1 family. Binds directly to helix 1 of the histone fold of histone H4, a region that is not accessible when H4 is in chromatin. Subunit of the chromatin assembly factor 1 (CAF-1) complex, which is composed of RBBP4, CHAF1B and CHAF1A. Subunit of the core histone deacetylase (HDAC) complex, which is composed of HDAC1, HDAC2, RBBP4 and RBBP7. The core HDAC complex associates with SIN3A, ARID4B/SAP180, SAP18, SAP30, SAP130, SUDS3/SAP45 and possibly ARID4A/RBP1 and ING1 to form the SIN3 HDAC complex. Component of the nucleosome remodeling and deacetylase (NuRD) repressor complex, composed of core proteins MTA1, MTA2, MTA3, RBBP4, RBBP7, HDAC1, HDAC2, MBD2, MBD3, and peripherally associated proteins CDK2AP1, CDK2AP2, GATAD2A, GATAD2B, CHD3, CHD4 and CHD5. The exact stoichiometry of the NuRD complex is unknown, and some subunits such as MBD2 and MBD3, GATAD2A and GATAD2B, and CHD3, CHD4 and CHD5 define mutually exclusive NuRD complexes. Interacts with ZNF512B; the interaction is direct and may play a role in repressing gene expression. The NuRD complex may also interact with MBD3L1 and MBD3L2. Component of the PRC2 complex, which consists of the core subunits EED, EZH1 or EZH2, SUZ12, and RBBP4, and various combinations of accessory subunits including AEBP2, JARID2, PHF19, MTF2 and EPOP. Forms a monomeric PRC2.2 (class 2) complex consisting of at least SUZ12, RBBP4, AEBP2 and JARID2. Forms a dimeric PRC2.1 (class 1, PRC-PCL) complex consisting of at least SUZ12, RBBP4, and PHF19; PHF19 stabilizes the dimeric structure which enhances PRC2 interaction with chromatin. Component of the NURF-1 ISWI chromatin remodeling complex (also called the nucleosome-remodeling factor (NURF) complex) at least composed of SMARCA1 (isoform 2), BPTF, RBBP4 and RBBP7. Within the complex interacts with isoform 2 of SMARCA1. Component of the BPFT-SMARCA1 complex at least composed of SMARCA1 (isoform 1), BPFT, RBBP4 and RBBP7; the complex is catalytically inactive and does not remodel chromatin. Within the complex interacts with isoform 1 of SMARCA1. Interacts with the ISWI chromatin remodeling complex component SMARCA5; the interaction is direct. Interacts with the viral protein-binding domain of the retinoblastoma protein (RB1). Component of the DREAM complex (also named LINC complex) at least composed of E2F4, E2F5, LIN9, LIN37, LIN52, LIN54, MYBL1, MYBL2, RBL1, RBL2, RBBP4, TFDP1 and TFDP2. The complex exists in quiescent cells where it represses cell cycle-dependent genes. It dissociates in S phase when LIN9, LIN37, LIN52 and LIN54 form a subcomplex that binds to MYBL2. Found in a complex composed of at least SINHCAF, SIN3A, HDAC1, SAP30, RBBP4, OGT and TET1. Interacts with ZNF827; the interaction is direct and recruits RBBP4 to telomeres. Interacts with MTA1; the interaction is direct and mutually exclusive with binding histone H4. Interacts with ARMC12 (via ARM domains). Interacts with BRCA1. Interacts with CDK2AP1. Interacts with CREBBP, and this interaction may be enhanced by the binding of phosphorylated CREB1 to CREBBP. Interacts with ERCC6. Interacts with HDAC7. Interacts with PHF6. Interacts with PWWP2B. Interacts with SPEN/MINT. Interacts with SUV39H1.

The protein resides in the nucleus. The protein localises to the chromosome. Its subcellular location is the telomere. Functionally, core histone-binding subunit that may target chromatin assembly factors, chromatin remodeling factors and histone deacetylases to their histone substrates in a manner that is regulated by nucleosomal DNA. Component of the chromatin assembly factor 1 (CAF-1) complex, which is required for chromatin assembly following DNA replication and DNA repair. Component of the core histone deacetylase (HDAC) complex, which promotes histone deacetylation and consequent transcriptional repression. Component of the nucleosome remodeling and histone deacetylase complex (the NuRD complex), which promotes transcriptional repression by histone deacetylation and nucleosome remodeling. Component of the PRC2 complex, which promotes repression of homeotic genes during development. Component of the NURF (nucleosome remodeling factor) complex. This Bos taurus (Bovine) protein is Histone-binding protein RBBP4 (RBBP4).